The chain runs to 517 residues: Probable cytosol aminopeptidase (517 aa).

Mn(2+) contacts are provided by Lys-279 and Asp-284. Residue Lys-291 is part of the active site. Asp-302, Asp-361, and Glu-363 together coordinate Mn(2+). Arg-365 is an active-site residue.

This sequence belongs to the peptidase M17 family. The cofactor is Mn(2+).

The protein resides in the cytoplasm. It catalyses the reaction Release of an N-terminal amino acid, Xaa-|-Yaa-, in which Xaa is preferably Leu, but may be other amino acids including Pro although not Arg or Lys, and Yaa may be Pro. Amino acid amides and methyl esters are also readily hydrolyzed, but rates on arylamides are exceedingly low.. It carries out the reaction Release of an N-terminal amino acid, preferentially leucine, but not glutamic or aspartic acids.. Functionally, presumably involved in the processing and regular turnover of intracellular proteins. Catalyzes the removal of unsubstituted N-terminal amino acids from various peptides. This chain is Probable cytosol aminopeptidase, found in Streptomyces coelicolor (strain ATCC BAA-471 / A3(2) / M145).